The primary structure comprises 573 residues: Phosphoenolpyruvate-protein phosphotransferase (573 aa).

Residue histidine 190 is the Tele-phosphohistidine intermediate of the active site. 2 residues coordinate phosphoenolpyruvate: arginine 297 and arginine 333. Positions 432 and 456 each coordinate Mg(2+). Phosphoenolpyruvate contacts are provided by residues 455-456 (ND) and arginine 466. The Proton donor role is filled by cysteine 503.

The protein belongs to the PEP-utilizing enzyme family. Homodimer. Requires Mg(2+) as cofactor.

It is found in the cytoplasm. The enzyme catalyses L-histidyl-[protein] + phosphoenolpyruvate = N(pros)-phospho-L-histidyl-[protein] + pyruvate. Functionally, general (non sugar-specific) component of the phosphoenolpyruvate-dependent sugar phosphotransferase system (sugar PTS). This major carbohydrate active-transport system catalyzes the phosphorylation of incoming sugar substrates concomitantly with their translocation across the cell membrane. Enzyme I transfers the phosphoryl group from phosphoenolpyruvate (PEP) to the phosphoryl carrier protein (HPr). The protein is Phosphoenolpyruvate-protein phosphotransferase (ptsI) of Priestia megaterium (Bacillus megaterium).